We begin with the raw amino-acid sequence, 436 residues long: 3-ketoacyl-CoA thiolase (436 aa).

The active-site Acyl-thioester intermediate is Cys-99. Catalysis depends on proton acceptor residues His-392 and Cys-422.

Belongs to the thiolase-like superfamily. Thiolase family. In terms of assembly, heterotetramer of two alpha chains (FadJ) and two beta chains (FadI).

It is found in the cytoplasm. It carries out the reaction an acyl-CoA + acetyl-CoA = a 3-oxoacyl-CoA + CoA. It functions in the pathway lipid metabolism; fatty acid beta-oxidation. Catalyzes the final step of fatty acid oxidation in which acetyl-CoA is released and the CoA ester of a fatty acid two carbons shorter is formed. This chain is 3-ketoacyl-CoA thiolase, found in Shewanella woodyi (strain ATCC 51908 / MS32).